Here is a 310-residue protein sequence, read N- to C-terminus: Coproporphyrin III ferrochelatase (310 aa).

Fe-coproporphyrin III is bound by residues tyrosine 13, arginine 30, 46–47 (RY), serine 54, and tyrosine 125. Fe(2+)-binding residues include histidine 181 and glutamate 262.

It belongs to the ferrochelatase family.

It localises to the cytoplasm. It catalyses the reaction Fe-coproporphyrin III + 2 H(+) = coproporphyrin III + Fe(2+). Its pathway is porphyrin-containing compound metabolism; protoheme biosynthesis. In terms of biological role, involved in coproporphyrin-dependent heme b biosynthesis. Catalyzes the insertion of ferrous iron into coproporphyrin III to form Fe-coproporphyrin III. The polypeptide is Coproporphyrin III ferrochelatase (Halalkalibacterium halodurans (strain ATCC BAA-125 / DSM 18197 / FERM 7344 / JCM 9153 / C-125) (Bacillus halodurans)).